The chain runs to 358 residues: 3-isopropylmalate dehydrogenase (358 aa).

79-92 is a binding site for NAD(+); that stretch reads GPKWEHLPPDEQPE. 4 residues coordinate substrate: arginine 100, arginine 110, arginine 139, and aspartate 227. Mg(2+) contacts are provided by aspartate 227, aspartate 251, and aspartate 255. 285–297 contributes to the NAD(+) binding site; sequence GSAPDIAGKGVAN.

This sequence belongs to the isocitrate and isopropylmalate dehydrogenases family. LeuB type 1 subfamily. In terms of assembly, homodimer. It depends on Mg(2+) as a cofactor. The cofactor is Mn(2+).

It is found in the cytoplasm. It carries out the reaction (2R,3S)-3-isopropylmalate + NAD(+) = 4-methyl-2-oxopentanoate + CO2 + NADH. The protein operates within amino-acid biosynthesis; L-leucine biosynthesis; L-leucine from 3-methyl-2-oxobutanoate: step 3/4. In terms of biological role, catalyzes the oxidation of 3-carboxy-2-hydroxy-4-methylpentanoate (3-isopropylmalate) to 3-carboxy-4-methyl-2-oxopentanoate. The product decarboxylates to 4-methyl-2 oxopentanoate. The chain is 3-isopropylmalate dehydrogenase from Pseudoalteromonas translucida (strain TAC 125).